The sequence spans 485 residues: Aspartyl protease family protein 2 (485 aa).

An N-terminal signal peptide occupies residues 1-23; the sequence is MVGRRKALLFSLCFFFLSLPSFS. Positions 43 to 71 are disordered; the sequence is PVSFQPDSDSESLLESEFESGSDSESSSS. The segment covering 50–64 has biased composition (acidic residues); it reads SDSESLLESEFESGS. The Peptidase A1 domain maps to 142–480; it reads YFTRLGVGTP…DLASSRVGFA (339 aa). Residues Asp160 and Asp365 contribute to the active site.

It belongs to the peptidase A1 family.

In terms of biological role, aspartyl protease. Not able to cleave BAG6. In Arabidopsis thaliana (Mouse-ear cress), this protein is Aspartyl protease family protein 2.